The chain runs to 426 residues: Alpha/beta hydrolase pydG (426 aa).

The protein belongs to the AB hydrolase superfamily. Homodimer.

Its pathway is mycotoxin biosynthesis. In terms of biological role, alpha/beta hydrolasee; part of the gene cluster that mediates the biosynthesis of pyrrocidines, fungal natural products containing a macrocyclic para-cyclophane connected to a decahydrofluorene ring system that show potent antibiotic activities toward Gram-negative bacteria. Within the pathway, pydG catalyzes the Knoevenagel condensation that affords the 3-pyrrolin-2-one ring, using as substrate the polyketide-tyrosyl acyl thioester product of pydA. The pathway begins with the PKS-NRPS pydA which, with the help of the trans-enoyl reductase pydC, synthesizes the polyketide-tyrosyl acyl thioester product which can be reductively off-loaded by the terminal reductase (R) domain in pydA. The alpha/beta hydrolase pydG is then required to catalyze the subsequent Knoevenagel condensation that affords the 3-pyrrolin-2-one ring, whereas the four proteins pydB, pydE, pydX and pydZ then function synergistically to form the cyclophane. PydB and the membrane-bound pydX and pydZ are lipid-binding proteins that can sequester and mold the pdyG product into the inverse S-shape. Binding of the medium chain reductase pydE to the complex would trigger the cascade oxidative cyclization. PydY is involved in the Diels-Alder cycloaddition that forms the decahydrofluorene core. Additional non-enzymatic hydroxylation yields pyrrocidine A2 which can be further reduced into pyrrocidine B by an endogenous reductase. This is Alpha/beta hydrolase pydG from Acremonium sp.